A 205-amino-acid polypeptide reads, in one-letter code: Ras-related protein RABD1 (205 aa).

Ser2 carries the post-translational modification N-acetylserine. Residues 15–23 (GDSSVGKSC), 33–40 (YIDSYIST), 63–67 (DTAGQ), 121–124 (NKND), and 151–153 (SAK) contribute to the GTP site. The Effector region signature appears at 37 to 45 (YISTIGVDF). 2 stretches are compositionally biased toward polar residues: residues 174–186 (GSQT…SGPG) and 194–205 (PIQQNNGGCCGQ). The tract at residues 174–205 (GSQTNANKTSGPGTVQMKGQPIQQNNGGCCGQ) is disordered. 2 S-geranylgeranyl cysteine lipidation sites follow: Cys202 and Cys203.

The protein belongs to the small GTPase superfamily. Rab family. Does not interact with GC5. Interacts with XI-2/MYA2.

The protein resides in the golgi apparatus. It is found in the trans-Golgi network membrane. It localises to the golgi apparatus membrane. Its function is as follows. Protein transport. Regulator of membrane traffic from the Golgi apparatus towards the endoplasmic reticulum (ER). The chain is Ras-related protein RABD1 (RABD1) from Arabidopsis thaliana (Mouse-ear cress).